The chain runs to 299 residues: Probable lipid kinase YegS-like (299 aa).

Positions 1-129 (MSERKALLIL…IDLGEVGGQM (129 aa)) constitute a DAGKc domain. Residues threonine 39, 65-71 (GDGTLRD), and threonine 92 contribute to the ATP site. Residues leucine 210, aspartate 213, and leucine 215 each coordinate Mg(2+). Catalysis depends on glutamate 268, which acts as the Proton acceptor.

Belongs to the diacylglycerol/lipid kinase family. YegS lipid kinase subfamily. Mg(2+) is required as a cofactor. It depends on Ca(2+) as a cofactor.

It localises to the cytoplasm. Its function is as follows. Probably phosphorylates lipids; the in vivo substrate is unknown. This is Probable lipid kinase YegS-like from Pseudomonas fluorescens (strain ATCC BAA-477 / NRRL B-23932 / Pf-5).